Reading from the N-terminus, the 867-residue chain is E3 ubiquitin-protein ligase SH3RF1 (867 aa).

An RING-type zinc finger spans residues Cys-12–Arg-53. The interval Ala-101–Pro-127 is disordered. Over residues Gly-116–Ser-125 the composition is skewed to polar residues. 2 SH3 domains span residues Pro-132–Pro-191 and Gln-194–Ala-257. The interval Asp-265–Ile-328 is disordered. A compositionally biased stretch (low complexity) spans Ser-275–Pro-285. The SH3 3 domain maps to Gln-436–Arg-497. Residues Leu-706 to Pro-794 form a disordered region. Residues Ser-760–Ser-769 show a composition bias toward low complexity. A compositionally biased stretch (polar residues) spans Asn-770–Thr-784. The 60-residue stretch at Ile-808–Ile-867 folds into the SH3 4 domain.

This sequence belongs to the SH3RF family. Autoubiquitinated. Ubiquitinated by SH3RF2, leading to proteasome-mediated degradation.

The protein localises to the cytoplasm. It is found in the perinuclear region. It localises to the cell projection. Its subcellular location is the lamellipodium. The protein resides in the golgi apparatus. The protein localises to the trans-Golgi network. The enzyme catalyses S-ubiquitinyl-[E2 ubiquitin-conjugating enzyme]-L-cysteine + [acceptor protein]-L-lysine = [E2 ubiquitin-conjugating enzyme]-L-cysteine + N(6)-ubiquitinyl-[acceptor protein]-L-lysine.. Its pathway is protein modification; protein ubiquitination. In terms of biological role, has E3 ubiquitin-protein ligase activity. In the absence of an external substrate, it can catalyze self-ubiquitination. Acts as a scaffold protein that contributes to the effective activation of the JNK signaling pathway. The polypeptide is E3 ubiquitin-protein ligase SH3RF1 (sh3rf1) (Danio rerio (Zebrafish)).